The chain runs to 138 residues: Large ribosomal subunit protein uL16 (138 aa).

Over residues Met-1 to Gln-17 the composition is skewed to basic residues. Residues Met-1 to Gly-24 form a disordered region.

It belongs to the universal ribosomal protein uL16 family. In terms of assembly, part of the 50S ribosomal subunit.

In terms of biological role, binds 23S rRNA and is also seen to make contacts with the A and possibly P site tRNAs. The protein is Large ribosomal subunit protein uL16 of Mycolicibacterium vanbaalenii (strain DSM 7251 / JCM 13017 / BCRC 16820 / KCTC 9966 / NRRL B-24157 / PYR-1) (Mycobacterium vanbaalenii).